The primary structure comprises 178 residues: Cytochrome b6-f complex iron-sulfur subunit 2 (178 aa).

Residues 17 to 36 (LLNFFTGAIVAATASAAIYP) traverse the membrane as a helical segment. The Rieske domain maps to 61 to 161 (GHPIPASQIL…VQVKDDYIWI (101 aa)). Residues Cys107, His109, Cys125, and His128 each coordinate [2Fe-2S] cluster. Cys112 and Cys127 are joined by a disulfide.

It belongs to the Rieske iron-sulfur protein family. In terms of assembly, the 4 large subunits of the cytochrome b6-f complex are cytochrome b6, subunit IV (17 kDa polypeptide, PetD), cytochrome f and the Rieske protein, while the 4 small subunits are PetG, PetL, PetM and PetN. The complex functions as a dimer. [2Fe-2S] cluster is required as a cofactor.

The protein localises to the cellular thylakoid membrane. It catalyses the reaction 2 oxidized [plastocyanin] + a plastoquinol + 2 H(+)(in) = 2 reduced [plastocyanin] + a plastoquinone + 4 H(+)(out). In terms of biological role, component of the cytochrome b6-f complex, which mediates electron transfer between photosystem II (PSII) and photosystem I (PSI), cyclic electron flow around PSI, and state transitions. In Trichormus variabilis (strain ATCC 29413 / PCC 7937) (Anabaena variabilis), this protein is Cytochrome b6-f complex iron-sulfur subunit 2.